We begin with the raw amino-acid sequence, 459 residues long: Proton-coupled folate transporter (459 aa).

An N-acetylmethionine modification is found at methionine 1. Topologically, residues 1 to 25 are cytoplasmic; it reads MEGRVSPVGSSHRLLTAAVLFRGPV. Serine 6 carries the post-translational modification Phosphoserine. A helical membrane pass occupies residues 26-44; that stretch reads EPLVFLANFALVLQGPLTT. At 45-82 the chain is on the extracellular side; that stretch reads QYIWHRISTELGYNGTRHRENCGNQSADPVLKEVETLT. N-linked (GlcNAc...) asparagine glycans are attached at residues asparagine 58 and asparagine 68. A disulfide bridge connects residues cysteine 66 and cysteine 298. The chain crosses the membrane as a helical span at residues 83-108; the sequence is SHWTLYMNVGGFLVGLFWSTLLGAWS. Over 109–112 the chain is Cytoplasmic; the sequence is DRVG. A helical membrane pass occupies residues 113 to 135; sequence RRPLLVLASLGLLLQAVVSIFVV. Residues 136-140 are Extracellular-facing; that stretch reads QLQLH. Residues 141–154 traverse the membrane as a helical segment; the sequence is IGFFVLGRALCALL. The Cytoplasmic portion of the chain corresponds to 155–177; that stretch reads GDFNGLLAASFASVADVSSNHSR. H(+)-binding residues include aspartate 156 and glutamate 185. The helical transmembrane segment at 178–203 threads the bilayer; sequence TFRMALLEACIGVAGTLASLLGGHWL. The Extracellular portion of the chain corresponds to 204–208; the sequence is RAQGY. The chain crosses the membrane as a helical span at residues 209 to 227; it reads ANPFWLALAVLIVMTLYAA. Over 228–266 the chain is Cytoplasmic; the sequence is FCFGETVKEPKSTRLFTLRHHRSIVQLYVVPAPEKSRMH. A helical membrane pass occupies residues 267-289; sequence LALYSLAIFVVVTVHFGAQDILT. H(+) is bound at residue histidine 281. The Extracellular portion of the chain corresponds to 290-302; the sequence is LYELSTPLCWDSK. Residues 303–325 traverse the membrane as a helical segment; that stretch reads LIGYGSAAQHLPYLTSLLGLRLL. The Cytoplasmic portion of the chain corresponds to 326–331; sequence QFCLAD. The helical transmembrane segment at 332-351 threads the bilayer; sequence TWVAEIGLAFNILGMVVFAF. At 352-355 the chain is on the extracellular side; sequence ATIT. Residues 356-376 form a helical membrane-spanning segment; sequence PLMFTGYGLLFLSLVTTPVIR. Topologically, residues 377–388 are cytoplasmic; sequence AKLSKLVSESEQ. The chain crosses the membrane as a helical span at residues 389–414; the sequence is GALFSAVACVNSLAMLMASGIFNSLY. The Extracellular portion of the chain corresponds to 415–422; it reads PATLNFMK. A helical membrane pass occupies residues 423–441; sequence GFPFLLGAGLLFIPAILIG. Residues 442-459 lie on the Cytoplasmic side of the membrane; it reads VLEKVNPHPEFQQFPQNS.

This sequence belongs to the major facilitator superfamily. SLC46A family. Monomer. As to expression, expressed almost exclusively in the small intestine: expressed at high level in the upper half of the small intestine (duodenum and jejunum), expression decreases downwardly in the subsequent quarter and is undetectable in the last quarter (the lowest ileum). Expressed at low level in other tissues, including liver.

It localises to the cell membrane. The protein localises to the apical cell membrane. The protein resides in the basolateral cell membrane. It is found in the endosome membrane. Its subcellular location is the cytoplasm. It catalyses the reaction folate(in) + H(+)(in) = folate(out) + H(+)(out). The enzyme catalyses (6S)-5-methyl-5,6,7,8-tetrahydrofolate(in) + H(+)(in) = (6S)-5-methyl-5,6,7,8-tetrahydrofolate(out) + H(+)(out). The catalysed reaction is methotrexate(in) + H(+)(in) = methotrexate(out) + H(+)(out). It carries out the reaction pemetrexed(in) + H(+)(in) = pemetrexed(out) + H(+)(out). In contrast to human ortholog, not inhibited by myricetin. Its function is as follows. Proton-coupled folate symporter that mediates folate absorption using an H(+) gradient as a driving force. Involved in the intestinal absorption of folates at the brush-border membrane of the proximal jejunum, and the transport from blood to cerebrospinal fluid across the choroid plexus. Functions at acidic pH via alternate outward- and inward-open conformation states. Protonation of residues in the outward open state primes the protein for transport. Binding of folate promotes breaking of salt bridge network and subsequent closure of the extracellular gate, leading to the inward-open state and release of protons and folate. Also able to transport antifolate drugs, such as methotrexate and pemetrexed. Involved in FOLR1-mediated endocytosis by serving as a route of export of folates from acidified endosomes. Also acts as a lower-affinity, pH-independent heme carrier protein and constitutes the main importer of heme in the intestine. Imports heme in the retina and retinal pigment epithelium, in neurons of the hippocampus, in hepatocytes and in the renal epithelial cells. Hence, participates in the trafficking of heme and increases intracellular iron content. This chain is Proton-coupled folate transporter, found in Rattus norvegicus (Rat).